Here is a 107-residue protein sequence, read N- to C-terminus: Iron-binding protein IscA (107 aa).

Positions 35, 99, and 101 each coordinate Fe cation.

Belongs to the HesB/IscA family. Homodimer; may form tetramers and higher multimers. The cofactor is Fe cation.

In terms of biological role, is able to transfer iron-sulfur clusters to apo-ferredoxin. Multiple cycles of [2Fe2S] cluster formation and transfer are observed, suggesting that IscA acts catalytically. Recruits intracellular free iron so as to provide iron for the assembly of transient iron-sulfur cluster in IscU in the presence of IscS, L-cysteine and the thioredoxin reductase system TrxA/TrxB. The polypeptide is Iron-binding protein IscA (Salmonella newport (strain SL254)).